The primary structure comprises 454 residues: uncharacterized protein (454 aa).

The HNH domain maps to 364–405 (CSRPGCDAPAYHSEVHHVTPWTTTHRTDINDLTLACGPDNRL). The tract at residues 415-434 (NAKGDTEWLPPAHLDHGQPR) is disordered.

Belongs to the Rv1128c/1148c/1588c/1702c/1945/3466 family.

This is an uncharacterized protein from Mycobacterium tuberculosis (strain CDC 1551 / Oshkosh).